The following is a 621-amino-acid chain: MBT domain-containing protein 1 (621 aa).

A compositionally biased stretch (basic and acidic residues) spans 1–21 (MEKTKDPADRSSRSERKRRDS). The interval 1–55 (MEKTKDPADRSSRSERKRRDSFGMFDGYDSCSEDTSSSSSSDESEEEVAPLPSSL) is disordered. A compositionally biased stretch (low complexity) spans 29 to 41 (DSCSEDTSSSSSS). The FCS-type zinc-finger motif lies at 68 to 103 (PDGKSGMATCEMCGMVGVRDAFYSKTKRFCSVSCSR). Cys77, Cys80, Cys97, and Cys101 together coordinate Zn(2+). MBT repeat units lie at residues 164 to 268 (FSWG…LVPP), 276 to 373 (TNWK…IGHR), 374 to 479 (FKRT…LTPP), and 487 to 583 (FKWF…LQPP). The tract at residues 581–621 (QPPAPQSNKDGQSNVSKQKKKSKSQPYKGHKKNFRKPGNRP) is disordered. Basic residues predominate over residues 597 to 621 (KQKKKSKSQPYKGHKKNFRKPGNRP).

Monomer. Component of the NuA4 histone acetyltransferase complex.

The protein localises to the nucleus. It is found in the chromosome. Chromatin reader component of the NuA4 histone acetyltransferase complex, a multiprotein complex involved in transcriptional activation of select genes principally by acetylation of nucleosomal histones H4 and H2A. The NuA4 complex plays a direct role in repair of DNA double-strand breaks (DSBs) by promoting homologous recombination (HR). MBTD1 specifically recognizes and binds monomethylated and dimethylated 'Lys-20' on histone H4 (H4K20me1 and H4K20me2, respectively). In the NuA4 complex, MBTD1 promotes recruitment of the complex to H4K20me marks by competing with TP53BP1 for binding to H4K20me. Following recruitment to H4K20me at DNA breaks, the NuA4 complex catalyzes acetylation of 'Lys-15' on histone H2A (H2AK15), blocking the ubiquitination mark required for TP53BP1 localization at DNA breaks, thereby promoting homologous recombination (HR). In Xenopus laevis (African clawed frog), this protein is MBT domain-containing protein 1.